Reading from the N-terminus, the 118-residue chain is Large ribosomal subunit protein uL22 (118 aa).

It belongs to the universal ribosomal protein uL22 family. As to quaternary structure, part of the 50S ribosomal subunit.

Functionally, this protein binds specifically to 23S rRNA; its binding is stimulated by other ribosomal proteins, e.g. L4, L17, and L20. It is important during the early stages of 50S assembly. It makes multiple contacts with different domains of the 23S rRNA in the assembled 50S subunit and ribosome. The globular domain of the protein is located near the polypeptide exit tunnel on the outside of the subunit, while an extended beta-hairpin is found that lines the wall of the exit tunnel in the center of the 70S ribosome. This chain is Large ribosomal subunit protein uL22, found in Leuconostoc mesenteroides subsp. mesenteroides (strain ATCC 8293 / DSM 20343 / BCRC 11652 / CCM 1803 / JCM 6124 / NCDO 523 / NBRC 100496 / NCIMB 8023 / NCTC 12954 / NRRL B-1118 / 37Y).